The primary structure comprises 192 residues: Probable molybdenum cofactor guanylyltransferase (192 aa).

Residues 8–10, K20, D69, and D94 each bind GTP; that span reads LAG. Position 94 (D94) interacts with Mg(2+).

This sequence belongs to the MobA family. It depends on Mg(2+) as a cofactor.

The protein resides in the cytoplasm. The catalysed reaction is Mo-molybdopterin + GTP + H(+) = Mo-molybdopterin guanine dinucleotide + diphosphate. Functionally, transfers a GMP moiety from GTP to Mo-molybdopterin (Mo-MPT) cofactor (Moco or molybdenum cofactor) to form Mo-molybdopterin guanine dinucleotide (Mo-MGD) cofactor. This chain is Probable molybdenum cofactor guanylyltransferase, found in Pyrococcus horikoshii (strain ATCC 700860 / DSM 12428 / JCM 9974 / NBRC 100139 / OT-3).